A 151-amino-acid chain; its full sequence is Large ribosomal subunit protein bL9 (151 aa).

The protein belongs to the bacterial ribosomal protein bL9 family.

Its function is as follows. Binds to the 23S rRNA. The protein is Large ribosomal subunit protein bL9 of Dehalococcoides mccartyi (strain ATCC BAA-2100 / JCM 16839 / KCTC 5957 / BAV1).